Here is a 351-residue protein sequence, read N- to C-terminus: Methionine import ATP-binding protein MetN (351 aa).

Residues 4–249 enclose the ABC transporter domain; sequence VQLDHVSVTF…PKAELTQKFV (246 aa). 41-48 serves as a coordination point for ATP; it reads GFSGAGKS.

The protein belongs to the ABC transporter superfamily. Methionine importer (TC 3.A.1.24) family. The complex is composed of two ATP-binding proteins (MetN), two transmembrane proteins (MetI) and a solute-binding protein (MetQ).

The protein localises to the cell membrane. The enzyme catalyses L-methionine(out) + ATP + H2O = L-methionine(in) + ADP + phosphate + H(+). It catalyses the reaction D-methionine(out) + ATP + H2O = D-methionine(in) + ADP + phosphate + H(+). In terms of biological role, part of the ABC transporter complex MetNIQ involved in methionine import. Responsible for energy coupling to the transport system. The chain is Methionine import ATP-binding protein MetN from Lactobacillus delbrueckii subsp. bulgaricus (strain ATCC 11842 / DSM 20081 / BCRC 10696 / JCM 1002 / NBRC 13953 / NCIMB 11778 / NCTC 12712 / WDCM 00102 / Lb 14).